The following is a 564-amino-acid chain: MFS-type transporter dmxR4 (564 aa).

The segment at 1–61 is disordered; the sequence is MSSERPDGSA…PAKEAPAKPA (61 aa). Over residues 25-44 the composition is skewed to polar residues; it reads TDSSRTSNDASQTSQDTAVQ. Over residues 47-57 the composition is skewed to basic and acidic residues; the sequence is PPKEAPAKEAP. 5 helical membrane passes run 71-91, 106-126, 138-158, 169-189, and 199-219; these read IALL…DRSI, AGDI…FQLL, TVFV…GAAP, LAGI…VFLI, and GLFG…GGGF. N-linked (GlcNAc...) asparagine glycosylation is present at Asn222. The next 7 membrane-spanning stretches (helical) occupy residues 227–247, 265–285, 299–319, 348–368, 376–396, 405–425, and 438–458; these read WCFY…ALWM, GLDL…LLAL, IIAL…LQAF, GVHL…GGFF, SPLA…IYTF, WIGS…APNL, and SALA…VSVG. An N-linked (GlcNAc...) asparagine glycan is attached at Asn469. A run of 2 helical transmembrane segments spans residues 470 to 490 and 512 to 532; these read LSWI…VSFL and VFMI…SMEW. A disordered region spans residues 534–564; the sequence is SVKSRGSWDEKPAAKPTDKPTEEKKVPPEAV. Positions 539 to 564 are enriched in basic and acidic residues; sequence GSWDEKPAAKPTDKPTEEKKVPPEAV.

The protein belongs to the major facilitator superfamily. TCR/Tet family.

It localises to the membrane. Functionally, MFS-type transporter; part of the gene cluster that mediates the biosynthesis of the dimeric xanthones cryptosporioptides. This Cryptosporiopsis sp. (strain 8999) protein is MFS-type transporter dmxR4.